We begin with the raw amino-acid sequence, 399 residues long: MTSRFGHSHHPRRGRSARARAGRREGVQSNFPATQVLERSAHSLPARERTALVMAGGTGGHIFPGLALAEALRERGWQVHWLGTPGSMEERLVPPRGFAFEPIDFSGVRGKGLKTLLALPLRLARACLQARAVVRRLQPDVVIGLGGYVTFPGGIAARLARKPLLLHEQNSVPGMANKLLSRLATRVYTAFPNVLPDAQWVGNPMRRAFTRQPRPERRLAGREGPLRLLVVGGSLGAKALNDIVPQALAWIHEQDRPIVTHQSGESQIEALRRSYAAAGVEATLTPFIEDTAAAFAEADLVLCRAGASTVTEIAAVGAAAVFVPFPHAVDDHQTTNAQYLVKVGGGWLVQQADLTAHGLAEMLQNMKRQDLLAKAQKARTMRKINATRDIVAACERLAR.

The segment covering Met1 to Ala21 has biased composition (basic residues). Positions Met1–Asn30 are disordered. UDP-N-acetyl-alpha-D-glucosamine contacts are provided by residues Thr58–Gly60, Asn170, Arg206, Ser234, Ile288, and Gln333.

Belongs to the glycosyltransferase 28 family. MurG subfamily.

It localises to the cell inner membrane. The enzyme catalyses di-trans,octa-cis-undecaprenyl diphospho-N-acetyl-alpha-D-muramoyl-L-alanyl-D-glutamyl-meso-2,6-diaminopimeloyl-D-alanyl-D-alanine + UDP-N-acetyl-alpha-D-glucosamine = di-trans,octa-cis-undecaprenyl diphospho-[N-acetyl-alpha-D-glucosaminyl-(1-&gt;4)]-N-acetyl-alpha-D-muramoyl-L-alanyl-D-glutamyl-meso-2,6-diaminopimeloyl-D-alanyl-D-alanine + UDP + H(+). Its pathway is cell wall biogenesis; peptidoglycan biosynthesis. Its function is as follows. Cell wall formation. Catalyzes the transfer of a GlcNAc subunit on undecaprenyl-pyrophosphoryl-MurNAc-pentapeptide (lipid intermediate I) to form undecaprenyl-pyrophosphoryl-MurNAc-(pentapeptide)GlcNAc (lipid intermediate II). In Acidovorax ebreus (strain TPSY) (Diaphorobacter sp. (strain TPSY)), this protein is UDP-N-acetylglucosamine--N-acetylmuramyl-(pentapeptide) pyrophosphoryl-undecaprenol N-acetylglucosamine transferase.